Consider the following 246-residue polypeptide: Large ribosomal subunit protein uL3 (246 aa).

N5-methylglutamine is present on Gln151.

Belongs to the universal ribosomal protein uL3 family. As to quaternary structure, part of the 50S ribosomal subunit. Forms a cluster with proteins L14 and L19. Methylated by PrmB.

In terms of biological role, one of the primary rRNA binding proteins, it binds directly near the 3'-end of the 23S rRNA, where it nucleates assembly of the 50S subunit. The sequence is that of Large ribosomal subunit protein uL3 from Bartonella quintana (strain Toulouse) (Rochalimaea quintana).